Consider the following 191-residue polypeptide: Zinc finger protein GIS2 (191 aa).

A C2H2-type zinc finger spans residues 55–77 (FKCHYCFRNFPTSQALGGHQNAH).

In terms of tissue distribution, expressed in inflorescence meristems, floral meristems and stem epidermis.

The protein localises to the nucleus. Probable transcription factor required for the initiation of inflorescence trichomes in response to gibberellin and cytokinin. Is not involved in the regulation of trichome branching. Is functionally equivalent to ZFP8. This Arabidopsis thaliana (Mouse-ear cress) protein is Zinc finger protein GIS2 (GIS2).